We begin with the raw amino-acid sequence, 111 residues long: Inner membrane protein H108R (111 aa).

The chain crosses the membrane as a helical span at residues 10 to 32 (LIVIITILITTRELSTTMLIVSL). The N-linked (GlcNAc...) asparagine; by host glycan is linked to Asn-65.

The protein belongs to the asfivirus H108R family.

Its subcellular location is the virion membrane. The sequence is that of Inner membrane protein H108R from African swine fever virus (isolate Tick/Malawi/Lil 20-1/1983) (ASFV).